Reading from the N-terminus, the 158-residue chain is UPF0260 protein RHECIAT_CH0001358 (158 aa).

Belongs to the UPF0260 family.

The chain is UPF0260 protein RHECIAT_CH0001358 from Rhizobium etli (strain CIAT 652).